The primary structure comprises 208 residues: Methylthioribulose-1-phosphate dehydratase (208 aa).

2 residues coordinate Zn(2+): His99 and His101.

Belongs to the aldolase class II family. MtnB subfamily. Requires Zn(2+) as cofactor.

It carries out the reaction 5-(methylsulfanyl)-D-ribulose 1-phosphate = 5-methylsulfanyl-2,3-dioxopentyl phosphate + H2O. Its pathway is amino-acid biosynthesis; L-methionine biosynthesis via salvage pathway; L-methionine from S-methyl-5-thio-alpha-D-ribose 1-phosphate: step 2/6. Catalyzes the dehydration of methylthioribulose-1-phosphate (MTRu-1-P) into 2,3-diketo-5-methylthiopentyl-1-phosphate (DK-MTP-1-P). In Aquifex aeolicus (strain VF5), this protein is Methylthioribulose-1-phosphate dehydratase.